Consider the following 87-residue polypeptide: Toxin CsEv2 (87 aa).

Positions 1–19 (MNSLLIITACLFLIGTVWA) are cleaved as a signal peptide. Positions 20–85 (KEGYLVNKST…TYPLPNKSCS (66 aa)) constitute an LCN-type CS-alpha/beta domain. 4 cysteine pairs are disulfide-bonded: C31–C84, C35–C60, C44–C65, and C48–C67.

It belongs to the long (4 C-C) scorpion toxin superfamily. Sodium channel inhibitor family. Beta subfamily. Expressed by the venom gland.

The protein localises to the secreted. Functionally, beta toxins bind voltage-independently at site-4 of sodium channels (Nav) and shift the voltage of activation toward more negative potentials thereby affecting sodium channel activation and promoting spontaneous and repetitive firing. Induces immediate paralysis in crickets after injection, with a total paralysis occurring within 15-30 minutes and lasting for 1-2 hours. Is also lethal to vertebrate (chicks) when injected in very high dosages (more that 100 mg/kg). The polypeptide is Toxin CsEv2 (Centruroides sculpturatus (Arizona bark scorpion)).